A 505-amino-acid polypeptide reads, in one-letter code: ATP synthase subunit alpha (505 aa).

170–177 lines the ATP pocket; sequence GDRQTGKS.

Belongs to the ATPase alpha/beta chains family. In terms of assembly, F-type ATPases have 2 components, CF(1) - the catalytic core - and CF(0) - the membrane proton channel. CF(1) has five subunits: alpha(3), beta(3), gamma(1), delta(1), epsilon(1). CF(0) has four main subunits: a(1), b(1), b'(1) and c(9-12).

Its subcellular location is the cellular thylakoid membrane. It carries out the reaction ATP + H2O + 4 H(+)(in) = ADP + phosphate + 5 H(+)(out). In terms of biological role, produces ATP from ADP in the presence of a proton gradient across the membrane. The alpha chain is a regulatory subunit. The chain is ATP synthase subunit alpha from Prochlorococcus marinus (strain AS9601).